The chain runs to 501 residues: UDP-N-acetylmuramate--L-alanine ligase (501 aa).

Residue 130–136 participates in ATP binding; the sequence is GTHGKTS.

This sequence belongs to the MurCDEF family.

It is found in the cytoplasm. It carries out the reaction UDP-N-acetyl-alpha-D-muramate + L-alanine + ATP = UDP-N-acetyl-alpha-D-muramoyl-L-alanine + ADP + phosphate + H(+). It participates in cell wall biogenesis; peptidoglycan biosynthesis. In terms of biological role, cell wall formation. This chain is UDP-N-acetylmuramate--L-alanine ligase, found in Nocardia farcinica (strain IFM 10152).